Here is a 153-residue protein sequence, read N- to C-terminus: Large ribosomal subunit protein uL15 (153 aa).

The segment at 21–40 (RGIGSGKGKTGGRGIKGQKS) is disordered. The span at 23 to 35 (IGSGKGKTGGRGI) shows a compositional bias: gly residues.

It belongs to the universal ribosomal protein uL15 family. In terms of assembly, part of the 50S ribosomal subunit.

Binds to the 23S rRNA. The sequence is that of Large ribosomal subunit protein uL15 from Rickettsia canadensis (strain McKiel).